Reading from the N-terminus, the 469-residue chain is RNA-editing ligase 1, mitochondrial (469 aa).

The N-terminal 44 residues, 1–44 (MQLQRLGAPLLKRLVGGCIRQSTAPIMPCVVVSGSGGFLTPVRT), are a transit peptide targeting the mitochondrion. ATP-binding positions include 59-61 (IEI), 86-92 (EKVHGTN), N92, R111, E159, F209, and 307-309 (KLR). Residue K87 is the N6-AMP-lysine intermediate of the active site. A disordered region spans residues 450–469 (AAAQSEAIPPLSPAAPTKGE).

This sequence belongs to the RNA ligase 2 family. As to quaternary structure, component of the RNA editing complex (editosome), a 1600 kDa complex composed of at least 20 proteins. Interacts with terminal uridylyltransferase MEAT1.

The protein localises to the mitochondrion. It catalyses the reaction ATP + (ribonucleotide)n-3'-hydroxyl + 5'-phospho-(ribonucleotide)m = (ribonucleotide)n+m + AMP + diphosphate.. Essential for RNA editing. RNA editing in kinetoplastid mitochondria inserts and deletes uridylates at multiple sites in pre-mRNAs as directed by guide RNAs. In Trypanosoma brucei brucei (strain 927/4 GUTat10.1), this protein is RNA-editing ligase 1, mitochondrial (REL1).